Here is a 213-residue protein sequence, read N- to C-terminus: Histone H1.1 (213 aa).

Residues 1–43 (MSETAPVAQAASTATEKPAAAKKTKKPAKAAAPRKKPAGPSVS) are disordered. N-acetylserine is present on S2. Phosphoserine occurs at positions 2 and 12. The segment covering 8 to 18 (AQAASTATEKP) has biased composition (low complexity). Residue K17 is modified to N6-acetyllysine. A compositionally biased stretch (basic residues) spans 20–37 (AAKKTKKPAKAAAPRKKP). N6-(beta-hydroxybutyryl)lysine is present on K36. Residues 38–111 (AGPSVSELIV…GAAGSFKLNK (74 aa)) form the H15 domain. The residue at position 43 (S43) is a Phosphoserine. An N6-(beta-hydroxybutyryl)lysine modification is found at K54. R56 is modified (citrulline). K66 carries the post-translational modification N6-(beta-hydroxybutyryl)lysine. S67 is subject to Phosphoserine. An N6-acetyllysine modification is found at K77. At K87 the chain carries N6-(beta-hydroxybutyryl)lysine. At K92 the chain carries N6-(beta-hydroxybutyryl)lysine; alternate. K92 carries the N6-acetyllysine; alternate modification. Phosphoserine is present on S106. At K108 the chain carries N6-(beta-hydroxybutyryl)lysine. Positions 112–213 (KAESKAITTK…KPKKAAPKKK (102 aa)) are disordered. Positions 120–144 (TKVSVKAKASGAAKKPKKTAGAAAK) are enriched in low complexity. N6-acetyllysine is present on K121. 2 stretches are compositionally biased toward basic residues: residues 145–178 (KTVK…KKVA) and 185–213 (KAVK…PKKK). The residue at position 201 (T201) is a Phosphothreonine.

The protein belongs to the histone H1/H5 family. Interacts with DFFB. Post-translationally, H1 histones are progressively phosphorylated during the cell cycle, becoming maximally phosphorylated during late G2 phase and M phase, and being dephosphorylated sharply thereafter. In terms of processing, citrullination at Arg-56 (H1R54ci) by PADI4 takes place within the DNA-binding site of H1 and results in its displacement from chromatin and global chromatin decondensation, thereby promoting pluripotency and stem cell maintenance. Hydroxybutyrylation of histones is induced by starvation. As to expression, restricted to thymus, testis and spleen. Present also in lymphocytic and neuronal cells. Increases in testis starting with a low level at day 5 and reaching high concentrations in 20-day old and adult animals.

It is found in the nucleus. Its subcellular location is the chromosome. Functionally, histone H1 protein binds to linker DNA between nucleosomes forming the macromolecular structure known as the chromatin fiber. Histones H1 are necessary for the condensation of nucleosome chains into higher-order structured fibers. Also acts as a regulator of individual gene transcription through chromatin remodeling, nucleosome spacing and DNA methylation. In Mus musculus (Mouse), this protein is Histone H1.1.